Consider the following 2335-residue polypeptide: MKKRKRRTFKRFIAAFLVLSLMISLLPADVLAKTTEEEAGNRIVSDDPEETPRNEQTEEAVPFPSKDINKEGEITSERTENTKLYYEGDGVYKQEVYLDPIHTKETPNADWEDISPELKESTSKQVETENAILNSDFQKQMKNGLYATFEHNDHKVTYSLVEAKGPNKTSLTPKDTSADYKTDSNEIVYPDVFPNIDLQTFTFNENIKEDLVLHQYDGYNTFTFQVKTDLQAKEQEDGSIDFSDEKGKVVFSVPKPFMTDSKLDELSGEVERSDKVSYKLEKNEEGYLLHLTADENWLKDPERVYPVSIDPSTSLSVSSDTFVMSAYPTTNYSASSQKWDANLKSYVLKTGYYDKTTGTNYAFMKFNNLKPIQNMAVTKATLKTYVAHSYYGTKATGLWLDTVNSNYDNGKVTWNTKPASKNIGKAEVHKGQWASYDVTAAVKSWNSGGANYGFKLHTNGNGKEYWKKLISSANSANKPYIEVTYTIPKGNTPSIKAYHNGDSTGYFDISWKKVEGAKGYKVWIYNGKEYQAISAGNVTSWSTKGKKIWPTSAEIASKRYKLHVDGKDGAELALDPSPVYKNSGGSYATSKNYWIGVSAIFDQGEGAMSAPAKPVIPNVGKAQAPSTKGYNNGNATGYFDLSWKAVSGATGYKVQVFNGKGFETLDLGNQTSWTTKGKKIWPTSAEIKAGKYALHLKDGNGAELPINPGPTYKNAGGDGAKKNYSFKIIAYNKDGEAIASPAANPTLPDIAKPKNLTGYLYTNTKSSQTGYVNLIWEKVQNAKGYKVNIYNGKEYQSYDVGDVDHWTTQNKNIWPTPEEIKAGSYKLHTDGKGRELALDPSPVYNNANGNYKGKKNYSFTLSAYNANGETIPTAPFNPTFHEGAEFLGTEEYWSIIDIPSGQLNGATGNVIVNEEDLSIDGRGPGLGLSRTYNSLDTSDHLFGQGWYADAETSVISTDGGAMYIDEDATTHRFTKKADGTYQPPTGVYLELTETADQFILKTKDQTNAYFNKKGGKLQKVVDGHNNATVYTYNDKNQLTAITDASGRKLTFTYDENGHVTSITGPKNKKVTYSYESDLLKKVTDTDGTVTSFDYDAEGRLVKQYSANSTEAKPVFTEYQYSGHRLEKAINAKKETYVYSYDADKKTLLMTQPNGRKVQYGYNEAGNPIQVIDDAEGLKITTNTKYEGNNVVEDVDPNDVGTGKATESYQYDKDGNVTSVKDAYGTETYEYNKNNDVTKMKDTEGNVTDIAYDGLDAVSETDQSGKSSSAAVYDKYGNQIQSSKDLSASTNILKDGSFEAQKSGWNLTASKDSGKISVIADKSGVLSGSKALEVLSQSTSAGTDHGYSSATQTVELEPNTTYTLSGKIKTDLAKSRAYFNIDLRDKDQKRIQWIHNEYSALAGKNDWTKRQITFTTPANAGKAVVYMEVDHRDKDGKGKAWFGEVQLEKGEVSSSYNPVQNSSFTAATENWSVSGASVDSEEGFNDDVSLKAARTSASQAGSVTKQTVVLGQNANDKPVYLTLTGMSKASSVKFTDEKDYSLQANVTYADGSTGVYNAKFPSGTQEWNRAAVVIPKTKPINKVDISILFQKSATGTVWFDDIRLIEGSLLTKSTYDSNGNYVTKEEDELGFSTSTDYDETGKKTAETDAKGEKTTYTYDQADQLTNMTLSNGTSILHSYDKEGNEVSKTIRAGADQTYKYEYDVMGKLVKTTDPLGNVLASEYDANSNLTKTISPNGNEVSLSYDGTDRVKSKSYNGTEKYNFTYDKNGNETSVVNKEQNTTKKRTFDNKNRLTELTDRGGSQTWTYPSDSDKLKTFSWSHGDQKGTNQFTYNKLDQMIEMKDSTSSYSFDYDENGNVQTFITGNGGGTSFSYDERNLVSSLHIGDKNGGSILTESYEYDANGNRTTINSSASGKVQYEYGKLNQLVKETHEDGTVIEYTYDGFGNRKTVTTVKDGSSKTVNASFNIMNQLTKVNDESISYDKNGNRTSDGKFTYTWDAEDNLTAVTKKGEDKPFATYKYDEKGNRIQKTVNGNVTNYFYDGDSLNVLYETDADNKVTKSYTYGDSGQLLSYTENGKKYFYHYNAHGDVIAISDSSGKTLAKYQYDAWGNPTKTEASDEVKDNRYRYAGYQYDEETGLYYLMARYYEPRNGVFLSLDPDPGSDGDSLDQNGYAYGNNNPVMNVDPDGHWVWLVVNAGFAAYDGYKAYKSGKGWKGAAWAAASNFGPGKIFKGAKRVYRFAKSGKNFNWKHIKKDHGPKSKARMPNGQPKSKFRSAKTLRRTTKATARTRPAYVQKDGRTVHFKKFKKPIGRKTNGRHTYTVKVVKSGRYVVTSYPY.

The N-terminal stretch at 1–32 (MKKRKRRTFKRFIAAFLVLSLMISLLPADVLA) is a signal peptide. The segment at 36-81 (EEEAGNRIVSDDPEETPRNEQTEEAVPFPSKDINKEGEITSERTEN) is disordered. Residues 67–81 (DINKEGEITSERTEN) show a composition bias toward basic and acidic residues. YD repeat units follow at residues 1032–1065 (YNDKNQLTAITDASGRKLTFTYDENGHVTSITGP), 1076–1103 (SDLLKKVTDTDGTVTSFDYDAEGRLVKQ), 1678–1716 (YDKEGNEVSKTIRAGADQTYKYEYDVMGKLVKTTDPLGN), 1898–1935 (YDANGNRTTINSSASGKVQYEYGKLNQLVKETHEDGTV), and 2082–2113 (YNAHGDVIAISDSSGKTLAKYQYDAWGNPTKT). 2 stretches are compositionally biased toward basic residues: residues 2251–2260 (KKDHGPKSKA) and 2269–2281 (SKFRSAKTLRRTT). Positions 2251–2285 (KKDHGPKSKARMPNGQPKSKFRSAKTLRRTTKATA) are disordered.

Belongs to the RHS/WapA nuclease family.

It is found in the secreted. Its subcellular location is the cell wall. Toxic component of a toxin-immunity protein module, which functions as a cellular contact-dependent growth inhibition (CDI) system. A site-specific tRNA3(Ser) nuclease, the C-terminus (residues 2201-2335) probably removes 2 or 4 nucleotides from the 3' end of tRNA3(Ser) but not tRNA2(Arg) or tRNA(Glu) (upon expression in E.coli), possibly endonucleolytically. The nuclease activity is neutralized by expression of the cognate immunity protein WapI from the same strain, but not its homolog from 2 other B.subtilis strains. The C-terminus cannot be expressed on its own in E.coli, however it can be cloned in the presence of its cognate immunity protein gene wapI. Cell contact is probably necessary for growth inhibition. This chain is tRNA3(Ser)-specific nuclease WapA (wapA), found in Bacillus spizizenii (strain DSM 15029 / JCM 12233 / NBRC 101239 / NRRL B-23049 / TU-B-10) (Bacillus subtilis subsp. spizizenii).